Here is a 360-residue protein sequence, read N- to C-terminus: DnaJ homolog subfamily C member 25 (360 aa).

A helical membrane pass occupies residues 20–40 (WMLLAPLLPALLLVRPAGALV). Positions 49–124 (DCYEVLGVSR…ETRKDYDYML (76 aa)) constitute a J domain. Helical transmembrane passes span 150-170 (VVILVSVCAISVFQFFSWWNS) and 244-264 (LLLFQIILAPFHLCSYIVWYC).

It belongs to the DNAJC25 family.

The protein localises to the membrane. In Homo sapiens (Human), this protein is DnaJ homolog subfamily C member 25 (DNAJC25).